The following is a 454-amino-acid chain: Bifunctional protein GlmU (454 aa).

The segment at 1–226 is pyrophosphorylase; sequence MALNVVILAA…AIEVEGANNR (226 aa). UDP-N-acetyl-alpha-D-glucosamine contacts are provided by residues 8-11, lysine 22, glutamine 73, 78-79, 100-102, glycine 137, glutamate 151, asparagine 166, and asparagine 224; these read LAAG, GT, and YGD. A Mg(2+)-binding site is contributed by aspartate 102. Position 224 (asparagine 224) interacts with Mg(2+). A linker region spans residues 227–247; sequence VQLAQLERAYQARAAEKLMLE. The interval 248–454 is N-acetyltransferase; the sequence is GANLRDPARI…GWPRPVKLKK (207 aa). Arginine 330 and lysine 348 together coordinate UDP-N-acetyl-alpha-D-glucosamine. The active-site Proton acceptor is the histidine 360. Tyrosine 363 and asparagine 374 together coordinate UDP-N-acetyl-alpha-D-glucosamine. Acetyl-CoA is bound by residues alanine 377, 383–384, serine 402, alanine 420, and arginine 437; that span reads NY.

It in the N-terminal section; belongs to the N-acetylglucosamine-1-phosphate uridyltransferase family. The protein in the C-terminal section; belongs to the transferase hexapeptide repeat family. Homotrimer. It depends on Mg(2+) as a cofactor.

It is found in the cytoplasm. The catalysed reaction is alpha-D-glucosamine 1-phosphate + acetyl-CoA = N-acetyl-alpha-D-glucosamine 1-phosphate + CoA + H(+). It carries out the reaction N-acetyl-alpha-D-glucosamine 1-phosphate + UTP + H(+) = UDP-N-acetyl-alpha-D-glucosamine + diphosphate. It functions in the pathway nucleotide-sugar biosynthesis; UDP-N-acetyl-alpha-D-glucosamine biosynthesis; N-acetyl-alpha-D-glucosamine 1-phosphate from alpha-D-glucosamine 6-phosphate (route II): step 2/2. It participates in nucleotide-sugar biosynthesis; UDP-N-acetyl-alpha-D-glucosamine biosynthesis; UDP-N-acetyl-alpha-D-glucosamine from N-acetyl-alpha-D-glucosamine 1-phosphate: step 1/1. The protein operates within bacterial outer membrane biogenesis; LPS lipid A biosynthesis. Functionally, catalyzes the last two sequential reactions in the de novo biosynthetic pathway for UDP-N-acetylglucosamine (UDP-GlcNAc). The C-terminal domain catalyzes the transfer of acetyl group from acetyl coenzyme A to glucosamine-1-phosphate (GlcN-1-P) to produce N-acetylglucosamine-1-phosphate (GlcNAc-1-P), which is converted into UDP-GlcNAc by the transfer of uridine 5-monophosphate (from uridine 5-triphosphate), a reaction catalyzed by the N-terminal domain. This chain is Bifunctional protein GlmU, found in Shewanella woodyi (strain ATCC 51908 / MS32).